Consider the following 141-residue polypeptide: Large ribosomal subunit protein bL17 (141 aa).

It belongs to the bacterial ribosomal protein bL17 family. In terms of assembly, part of the 50S ribosomal subunit. Contacts protein L32.

This Agrobacterium fabrum (strain C58 / ATCC 33970) (Agrobacterium tumefaciens (strain C58)) protein is Large ribosomal subunit protein bL17.